Reading from the N-terminus, the 686-residue chain is U3 small nucleolar RNA-associated protein 4 homolog (686 aa).

WD repeat units lie at residues 7–50 (HRVR…ANYF), 51–92 (QEKF…QALN), 93–135 (IKYA…PDKI), 136–181 (QFER…AVHK), 182–226 (MIVD…SATG), 227–275 (TLVK…SSEK), 276–317 (QWVR…LMEK), 318–377 (VEVK…PLSK), 378–427 (NADH…NISL), 428–475 (KRVS…KHLH), 476–516 (AFQP…VKQL), 517–566 (KLHC…WSRT), 567–627 (VQKQ…FPPT), and 628–666 (NESD…AVER). A Glycyl lysine isopeptide (Lys-Gly) (interchain with G-Cter in SUMO2) cross-link involves residue Lys-321.

Interacts with HIVEP1 Interacts with NOL11. Part of the small subunit (SSU) processome, composed of more than 70 proteins and the RNA chaperone small nucleolar RNA (snoRNA) U3. May be a component of the proposed t-UTP subcomplex of the ribosomal small subunit (SSU) processome containing at least UTP4, WDR43, HEATR1, UTP15, WDR75. In terms of processing, may be phosphorylated during mitosis; may control the association of this protein with WRD43 and UTP15.

The protein resides in the nucleus. It localises to the nucleolus. It is found in the chromosome. Functionally, ribosome biogenesis factor. Involved in nucleolar processing of pre-18S ribosomal RNA. Part of the small subunit (SSU) processome, first precursor of the small eukaryotic ribosomal subunit. During the assembly of the SSU processome in the nucleolus, many ribosome biogenesis factors, an RNA chaperone and ribosomal proteins associate with the nascent pre-rRNA and work in concert to generate RNA folding, modifications, rearrangements and cleavage as well as targeted d Involved in SSU pre-rRNA processing at sites A', A0, 1 and 2b. Required for optimal pre-ribosomal RNA transcription by RNA polymerase. May be a transcriptional regulator. Its function is as follows. (Microbial infection) Acts as a positive regulator of HIVEP1 which specifically binds to the DNA sequence 5'-GGGACTTTCC-3' found in enhancer elements of numerous viral promoters such as those of HIV-1, SV40, or CMV. The sequence is that of U3 small nucleolar RNA-associated protein 4 homolog from Homo sapiens (Human).